Here is a 160-residue protein sequence, read N- to C-terminus: MEIPVPVQPSWLRRASAPLPGLSAPGRLFDQRFGEGLLEAELAALCPTTLAPYYLRAPSVALPVAQVPTDPGHFSVLLDVKHFSPEEIAVKVVGEHVEVHARHEERPDEHGFVAREFHRRYRLPPGVDPAAVTSALSPEGVLSIQAAPASAQAPPPAAAK.

Residues 1–72 form an involved in stabilization of the HSPB1:HSBP6 heterodimer region; sequence MEIPVPVQPS…PVAQVPTDPG (72 aa). At S16 the chain carries Phosphoserine; by PKA. The region spanning 55–160 is the sHSP domain; the sequence is LRAPSVALPV…AQAPPPAAAK (106 aa). Q66 carries the post-translational modification Deamidated glutamine.

The protein belongs to the small heat shock protein (HSP20) family. In terms of assembly, homodimer. Small heat shock proteins form high molecular mass oligomers containing variable number of monomers; these oligomers display a very flexible quaternary structure easily exchanging their subunits. Heterooligomer with HSPB1; formed through oligomerization of HSPB1:HSBP6 dimers; subunit exchange leads to formation of at least two different heterooligomeric complexes, differing in variable quantities of HSPB1 and HSPB6 homodimers in addition to HSPB1:HSPB6 heterodimers. Heterooligomer with CRYAB; large heterooligomers consist of CRYAB homodimers and HSPB5:HSPB6 heterodimers but lacking HSPB6 homodimers. Interacts with BAG3. Interacts (phosphorylated) with YWHAZ. Interacts with PDE4A and PDE4D; required for maintenance of the non-phosphorylated state of HSPB6 under basal conditions. Interacts with KDR. Interacts with PRKD1. The N-terminus is blocked. Post-translationally, phosphorylated at Ser-16 by PKA and probably PKD1K; required to protect cardiomyocytes from apoptosis.

It localises to the cytoplasm. The protein localises to the nucleus. The protein resides in the secreted. Functionally, small heat shock protein which functions as a molecular chaperone probably maintaining denatured proteins in a folding-competent state. Seems to have versatile functions in various biological processes. Plays a role in regulating muscle function such as smooth muscle vasorelaxation and cardiac myocyte contractility. May regulate myocardial angiogenesis implicating KDR. Overexpression mediates cardioprotection and angiogenesis after induced damage. Stabilizes monomeric YWHAZ thereby supporting YWHAZ chaperone-like activity. The polypeptide is Heat shock protein beta-6 (HSPB6) (Homo sapiens (Human)).